The sequence spans 561 residues: MKELLYMELAEVYHRLESTTKRLEKTEILAELLRSVDKELLPDVTILMLGRVFPIWSEEELGVGIKLLMKAISLVVGVSMDEIEDEIREQGDIGLASEKLFSRKTQTTFFSQPLTVEFVYSRLKALASASGDRAQSKKINILVEVLSQAKPLEARYITRTVLEELRVGVAEGIIRDAIARAFEVDPALVERAHMLTNDLGMVAAVAREEGEPGLGRLNLEPGRPVKPMLAQLASSIESAITELGRAFCETKYDGIRVQIHRCGDEISIFTRRLENITAAVPEILEGVEEALPADDYIVEGEIIVTMDGRPASFQYILQRVRRKYDVERLTREVPLSLFLFDVLYHREPLIDEPLRHRREVLESILSEIPGRVEASRMVDVGPDNLNDALWLFEESIREGHEGIMIKDTEAPYIPGIRGKKMLKFKAEPETLDLIVVGGTYGRGKRAHLVGSYLLAARDEDSGDLVTVAHVATGLDDETLQQLSERMEKLAIERKGRKLLVRPEIILEVAYSEIVKSPEYESGYSLRFPVVKRIRDDLCLDDVDTVGRIESLFQSGQPDQPG.

E249 is a binding site for ATP. The active-site N6-AMP-lysine intermediate is K251. 6 residues coordinate ATP: R256, R271, E301, F340, R417, and K423.

The protein belongs to the ATP-dependent DNA ligase family. Mg(2+) is required as a cofactor.

It carries out the reaction ATP + (deoxyribonucleotide)n-3'-hydroxyl + 5'-phospho-(deoxyribonucleotide)m = (deoxyribonucleotide)n+m + AMP + diphosphate.. Its function is as follows. DNA ligase that seals nicks in double-stranded DNA during DNA replication, DNA recombination and DNA repair. The chain is DNA ligase from Methanothermobacter thermautotrophicus (strain ATCC 29096 / DSM 1053 / JCM 10044 / NBRC 100330 / Delta H) (Methanobacterium thermoautotrophicum).